The chain runs to 330 residues: D-cysteine desulfhydrase (330 aa).

Residue lysine 52 is modified to N6-(pyridoxal phosphate)lysine.

Belongs to the ACC deaminase/D-cysteine desulfhydrase family. As to quaternary structure, homodimer. Requires pyridoxal 5'-phosphate as cofactor.

The catalysed reaction is D-cysteine + H2O = hydrogen sulfide + pyruvate + NH4(+) + H(+). Catalyzes the alpha,beta-elimination reaction of D-cysteine and of several D-cysteine derivatives. It could be a defense mechanism against D-cysteine. The sequence is that of D-cysteine desulfhydrase from Serratia proteamaculans (strain 568).